Reading from the N-terminus, the 372-residue chain is 4-hydroxy-3-methylbut-2-en-1-yl diphosphate synthase (flavodoxin) (372 aa).

4 residues coordinate [4Fe-4S] cluster: C270, C273, C305, and E312.

Belongs to the IspG family. It depends on [4Fe-4S] cluster as a cofactor.

It catalyses the reaction (2E)-4-hydroxy-3-methylbut-2-enyl diphosphate + oxidized [flavodoxin] + H2O + 2 H(+) = 2-C-methyl-D-erythritol 2,4-cyclic diphosphate + reduced [flavodoxin]. It functions in the pathway isoprenoid biosynthesis; isopentenyl diphosphate biosynthesis via DXP pathway; isopentenyl diphosphate from 1-deoxy-D-xylulose 5-phosphate: step 5/6. In terms of biological role, converts 2C-methyl-D-erythritol 2,4-cyclodiphosphate (ME-2,4cPP) into 1-hydroxy-2-methyl-2-(E)-butenyl 4-diphosphate. The chain is 4-hydroxy-3-methylbut-2-en-1-yl diphosphate synthase (flavodoxin) from Escherichia coli O139:H28 (strain E24377A / ETEC).